Consider the following 301-residue polypeptide: Ubiquitin thioesterase OTU1 (301 aa).

Positions 4-80 (KVTGAGINQV…TIESSDSNES (77 aa)) are UBX-like. Residues 109 to 229 (LSVHPVLDDN…GIHYDSLTMN (121 aa)) enclose the OTU domain. The tract at residues 114 to 120 (VLDDNSC) is cys-loop. Asp-117 is a catalytic residue. The active-site Nucleophile is Cys-120. A Glycyl lysine isopeptide (Lys-Gly) (interchain with G-Cter in ubiquitin) cross-link involves residue Lys-160. The segment at 169 to 179 (ILKMESWGGAI) is variable-loop. The his-loop stretch occupies residues 218-222 (FNGIH). Residue Ile-221 participates in substrate binding. Residue His-222 is part of the active site. The S2 site stretch occupies residues 243 to 248 (DDVLTA). The C2H2-type zinc finger occupies 270–294 (IKCNTCQMTFVGEREVARHAESTGH). His-294 is a catalytic residue.

Forms a complex composed of CDC48, NPL4, UFD1, DOA1, SHP1 and deubiquitinase OTU1; within the complex interacts with CDC48 and DOA1/UFD3.

It is found in the cytoplasm. It localises to the nucleus. It catalyses the reaction Thiol-dependent hydrolysis of ester, thioester, amide, peptide and isopeptide bonds formed by the C-terminal Gly of ubiquitin (a 76-residue protein attached to proteins as an intracellular targeting signal).. Its function is as follows. Hydrolase that can remove conjugated ubiquitin from proteins and may therefore play an important regulatory role at the level of protein turnover by preventing degradation. Participates in the regulation of the ubiquitin conjugation pathway involving CDC48 by hindering multiubiquitination of substrates at the CDC48 chaperone. May be indirectly involved in PIS1 gene expression. The polypeptide is Ubiquitin thioesterase OTU1 (OTU1) (Saccharomyces cerevisiae (strain ATCC 204508 / S288c) (Baker's yeast)).